Here is a 648-residue protein sequence, read N- to C-terminus: PTS system N-acetylglucosamine-specific EIICBA component (648 aa).

The residue at position 1 (Met-1) is an N-formylmethionine. One can recognise a PTS EIIC type-1 domain in the interval 1 to 371 (MNILGFFQRL…FNLKTPGRED (371 aa)). The next 12 helical transmembrane spans lie at 16–36 (LPIAVLPVAALLLRFGQPDLL), 38–58 (VAFIAQAGGAIFDNLALIFAI), 70–90 (GAAALAGAVGYFVLTKAMVTI), 92–112 (PEINMGVLAGIITGLVGGAAY), 132–152 (FVPIATGFFCLVLAAIFGYVW), 159–179 (IHAGGEWIVSAGALGSGIFGF), 192–212 (VLNTIAWFQIGEFTNAAGTVF), 232–252 (GFFPIMMFGLPGAALAMYFAA), 260–280 (VGGMLLSVAVTAFLTGVTEPL), 282–302 (FLFMFLAPLLYLLHALLTGIS), 303–323 (LFVATLLGIHAGFSFSAGAID), and 339–359 (MLLVMGVIFFAIYFVVFSLVI). The 83-residue stretch at 390–472 (TQLATNYIAA…KKVVARGPVA (83 aa)) folds into the PTS EIIB type-1 domain. Residue Cys-412 is the Phosphocysteine intermediate; for EIIB activity of the active site. Cys-412 carries the post-translational modification Phosphocysteine; by EIIA. Positions 517 to 621 (DEAFASKAVG…SMISPVVCSN (105 aa)) constitute a PTS EIIA type-1 domain. 2 residues coordinate Zn(2+): His-554 and His-569. The Tele-phosphohistidine intermediate; for EIIA activity role is filled by His-569. His-569 is modified (phosphohistidine; by HPr).

It depends on Zn(2+) as a cofactor. In terms of processing, 60% of isolated protein was N-formylated.

Its subcellular location is the cell inner membrane. The enzyme catalyses N(pros)-phospho-L-histidyl-[protein] + N-acetyl-D-glucosamine(out) = N-acetyl-D-glucosamine 6-phosphate(in) + L-histidyl-[protein]. With respect to regulation, P-chloromercuribenzoate inhibits the accumulation of both N-acetyl-D-glucosamine and antibiotic streptozotocin (2-deoxy-2-(3-methyl-3-nitrosoureido)-D-glucopyranose). N-acetyl-D-glucosamine is a competitive inhibitor for the uptake of streptozotocin. Functionally, the phosphoenolpyruvate-dependent sugar phosphotransferase system (sugar PTS), a major carbohydrate active transport system, catalyzes the phosphorylation of incoming sugar substrates concomitantly with their translocation across the cell membrane. This system is involved in N-acetylglucosamine transport. It can also transport and phosphorylate the antibiotic streptozotocin. Could play a significant role in the recycling of peptidoglycan. The sequence is that of PTS system N-acetylglucosamine-specific EIICBA component from Escherichia coli (strain K12).